The sequence spans 238 residues: Ribonuclease PH (238 aa).

Phosphate is bound by residues arginine 86 and 124–126; that span reads GTR.

It belongs to the RNase PH family. Homohexameric ring arranged as a trimer of dimers.

It catalyses the reaction tRNA(n+1) + phosphate = tRNA(n) + a ribonucleoside 5'-diphosphate. Phosphorolytic 3'-5' exoribonuclease that plays an important role in tRNA 3'-end maturation. Removes nucleotide residues following the 3'-CCA terminus of tRNAs; can also add nucleotides to the ends of RNA molecules by using nucleoside diphosphates as substrates, but this may not be physiologically important. Probably plays a role in initiation of 16S rRNA degradation (leading to ribosome degradation) during starvation. In Psychrobacter sp. (strain PRwf-1), this protein is Ribonuclease PH.